The chain runs to 143 residues: FIS1-related protein fis-1 (143 aa).

A helical membrane pass occupies residues 121–141; sequence LGLLGGAVAVVGGLVIAGLAF.

Belongs to the FIS1 family.

It is found in the mitochondrion outer membrane. The protein resides in the peroxisome membrane. Involved in the fragmentation of the mitochondrial network. Involved in perinuclear clustering of the mitochondrial network. Plays a role in removal of ultraviolet C radiation-induced mitochondrial DNA damage. May act, redundantly with fis-2, downstream of mitochondrial fission, before the fission products participate in either mitochondrial homeostasis, mitophagy, or apoptosis. This Caenorhabditis elegans protein is FIS1-related protein fis-1.